The chain runs to 699 residues: Polyribonucleotide nucleotidyltransferase (699 aa).

Mg(2+)-binding residues include D485 and D491. Residues 552 to 611 (PRITTIKINPEKIRDVIGKGGAVIRALTEETGTTIELEDDGTVKIASNNGDATREAIRRI) form the KH domain. The S1 motif domain occupies 621–689 (GRLYTGKVIR…RQGRVRLSIK (69 aa)).

The protein belongs to the polyribonucleotide nucleotidyltransferase family. Component of the RNA degradosome, which is a multiprotein complex involved in RNA processing and mRNA degradation. Mg(2+) is required as a cofactor.

The protein localises to the cytoplasm. The catalysed reaction is RNA(n+1) + phosphate = RNA(n) + a ribonucleoside 5'-diphosphate. In terms of biological role, involved in mRNA degradation. Catalyzes the phosphorolysis of single-stranded polyribonucleotides processively in the 3'- to 5'-direction. This is Polyribonucleotide nucleotidyltransferase from Shewanella amazonensis (strain ATCC BAA-1098 / SB2B).